The following is a 74-amino-acid chain: Protein krueppel (74 aa).

C2H2-type zinc fingers lie at residues 1–4 (ERTH), 10–32 (FECPECHKRFTRDHHLKTHMRLH), 38–60 (YHCSHCDRQFVQVANLRRHLRVH), and 66–74 (YTCEICDGK).

This sequence belongs to the krueppel C2H2-type zinc-finger protein family.

It localises to the nucleus. Its function is as follows. Krueppel is a gap class segmentation protein. The chain is Protein krueppel (Kr) from Musca domestica (House fly).